We begin with the raw amino-acid sequence, 180 residues long: ATP synthase subunit delta (180 aa).

This sequence belongs to the ATPase delta chain family. As to quaternary structure, F-type ATPases have 2 components, F(1) - the catalytic core - and F(0) - the membrane proton channel. F(1) has five subunits: alpha(3), beta(3), gamma(1), delta(1), epsilon(1). CF(0) has four main subunits: a(1), b(1), b'(1) and c(10-14). The alpha and beta chains form an alternating ring which encloses part of the gamma chain. F(1) is attached to F(0) by a central stalk formed by the gamma and epsilon chains, while a peripheral stalk is formed by the delta, b and b' chains.

It is found in the cellular thylakoid membrane. Functionally, f(1)F(0) ATP synthase produces ATP from ADP in the presence of a proton or sodium gradient. F-type ATPases consist of two structural domains, F(1) containing the extramembraneous catalytic core and F(0) containing the membrane proton channel, linked together by a central stalk and a peripheral stalk. During catalysis, ATP synthesis in the catalytic domain of F(1) is coupled via a rotary mechanism of the central stalk subunits to proton translocation. In terms of biological role, this protein is part of the stalk that links CF(0) to CF(1). It either transmits conformational changes from CF(0) to CF(1) or is implicated in proton conduction. In Prochlorococcus marinus (strain MIT 9312), this protein is ATP synthase subunit delta.